We begin with the raw amino-acid sequence, 718 residues long: Peroxisomal bifunctional enzyme (718 aa).

The interval 1–280 (MAEYLRLPHS…FAEKSANKWS (280 aa)) is enoyl-CoA hydratase / isomerase. Residue K38 is modified to N6-succinyllysine. G99 is a substrate binding site. N6-acetyllysine; alternate occurs at positions 163 and 172. 2 positions are modified to N6-succinyllysine; alternate: K163 and K172. Position 181 is an N6-succinyllysine (K181). N6-acetyllysine; alternate is present on residues K189 and K217. N6-succinyllysine; alternate is present on residues K189 and K217. The residue at position 240 (K240) is an N6-succinyllysine. Position 248 is an N6-acetyllysine (K248). An N6-succinyllysine modification is found at K252. K274 is subject to N6-acetyllysine; alternate. K274 bears the N6-succinyllysine; alternate mark. Residues K278, K288, and K329 each carry the N6-succinyllysine modification. A 3-hydroxyacyl-CoA dehydrogenase region spans residues 281–567 (TPSGASWKTA…DMLCEAGRFG (287 aa)). K344, K348, K355, and K459 each carry N6-acetyllysine. K527 carries the N6-succinyllysine modification. Phosphothreonine is present on T543. N6-succinyllysine is present on K572. An N6-acetyllysine; alternate mark is found at K579, K586, and K705. N6-succinyllysine; alternate occurs at positions 579, 586, and 705. Residues 716-718 (SKL) carry the Microbody targeting signal motif. K717 carries the post-translational modification N6-succinyllysine.

In the N-terminal section; belongs to the enoyl-CoA hydratase/isomerase family. The protein in the C-terminal section; belongs to the 3-hydroxyacyl-CoA dehydrogenase family. As to quaternary structure, monomer. Acetylated, leading to enhanced enzyme activity. Acetylation is enhanced by up to 80% after treatment either with trichostin A (TCA) or with nicotinamide (NAM) with highest increase on Lys-344. Acetylation and enzyme activity increased by about 1.5% on addition of fatty acids.

Its subcellular location is the peroxisome. The catalysed reaction is a (3S)-3-hydroxyacyl-CoA = a (2E)-enoyl-CoA + H2O. It carries out the reaction a 4-saturated-(3S)-3-hydroxyacyl-CoA = a (3E)-enoyl-CoA + H2O. It catalyses the reaction a (3Z)-enoyl-CoA = a 4-saturated (2E)-enoyl-CoA. The enzyme catalyses a (3E)-enoyl-CoA = a 4-saturated (2E)-enoyl-CoA. The catalysed reaction is a (3S)-3-hydroxyacyl-CoA + NAD(+) = a 3-oxoacyl-CoA + NADH + H(+). It carries out the reaction (2S,3S)-3-hydroxy-2-methylbutanoyl-CoA = (2E)-2-methylbut-2-enoyl-CoA + H2O. It catalyses the reaction (2E)-dodecenedioyl-CoA + H2O = (3S)-hydroxydodecanedioyl-CoA. The enzyme catalyses (3S)-hydroxydodecanedioyl-CoA + NAD(+) = 3-oxododecanedioyl-CoA + NADH + H(+). The catalysed reaction is (2E)-octenedioyl-CoA + H2O = (3S)-hydroxyoctanedioyl-CoA. It carries out the reaction (3S)-hydroxyoctanedioyl-CoA + NAD(+) = 3-oxooctanedioyl-CoA + NADH + H(+). It catalyses the reaction (2E)-decenedioyl-CoA + H2O = (3S)-hydroxydecanedioyl-CoA. The enzyme catalyses (3S)-hydroxydecanedioyl-CoA + NAD(+) = 3-oxodecanedioyl-CoA + NADH + H(+). The catalysed reaction is (2E)-tetradecenedioyl-CoA + H2O = (3S)-hydroxytetradecanedioyl-CoA. It carries out the reaction (3S)-hydroxytetradecanedioyl-CoA + NAD(+) = 3-oxotetradecanedioyl-CoA + NADH + H(+). It catalyses the reaction (3E,5Z)-tetradecadienoyl-CoA = (2E,5Z)-tetradecadienoyl-CoA. The enzyme catalyses (3E,5Z)-octadienoyl-CoA = (2E,5Z)-octadienoyl-CoA. The catalysed reaction is (3S)-hydroxydecanoyl-CoA + NAD(+) = 3-oxodecanoyl-CoA + NADH + H(+). It carries out the reaction (3E)-decenoyl-CoA = (2E)-decenoyl-CoA. It catalyses the reaction (3Z)-hexenoyl-CoA = (2E)-hexenoyl-CoA. The enzyme catalyses (3E)-hexenoyl-CoA = (2E)-hexenoyl-CoA. The catalysed reaction is (3S)-hydroxydecanoyl-CoA = (2E)-decenoyl-CoA + H2O. It carries out the reaction (3S)-hydroxyhexanoyl-CoA = (2E)-hexenoyl-CoA + H2O. It catalyses the reaction (3S)-hydroxyhexadecanoyl-CoA + NAD(+) = 3-oxohexadecanoyl-CoA + NADH + H(+). The enzyme catalyses (3S)-hydroxyhexadecanoyl-CoA = (2E)-hexadecenoyl-CoA + H2O. The catalysed reaction is (2E)-hexadecenedioyl-CoA + H2O = (3S)-hydroxyhexadecanedioyl-CoA. It carries out the reaction (3S)-hydroxyhexadecanedioyl-CoA + NAD(+) = 3-oxohexadecanedioyl-CoA + NADH + H(+). It functions in the pathway lipid metabolism; fatty acid beta-oxidation. With respect to regulation, enzyme activity enhanced by acetylation. Its function is as follows. Peroxisomal trifunctional enzyme possessing 2-enoyl-CoA hydratase, 3-hydroxyacyl-CoA dehydrogenase, and delta 3, delta 2-enoyl-CoA isomerase activities. Catalyzes two of the four reactions of the long chain fatty acids peroxisomal beta-oxidation pathway. Can also use branched-chain fatty acids such as 2-methyl-2E-butenoyl-CoA as a substrate, which is hydrated into (2S,3S)-3-hydroxy-2-methylbutanoyl-CoA. Optimal isomerase for 2,5 double bonds into 3,5 form isomerization in a range of enoyl-CoA species. Also able to isomerize both 3-cis and 3-trans double bonds into the 2-trans form in a range of enoyl-CoA species. With HSD17B4, catalyzes the hydration of trans-2-enoyl-CoA and the dehydrogenation of 3-hydroxyacyl-CoA, but with opposite chiral specificity. Regulates the amount of medium-chain dicarboxylic fatty acids which are essential regulators of all fatty acid oxidation pathways. Also involved in the degradation of long-chain dicarboxylic acids through peroxisomal beta-oxidation. This is Peroxisomal bifunctional enzyme from Mus musculus (Mouse).